The chain runs to 435 residues: MLKEQPKGTVTVLLGAQWGDEGKGKIVDYLIAKDKVQVVARCQGGNNAGHTVVANGRKYDFHIIPSGIIAEKCFNIIGNGTVVNLDSFFEELDHNKITNIPGWEKRILISDRAHLICDIHMLVDGHSEDRLNINKIGTTKKGIGPTYSSKCFRNGLRVGDLVYDFDGFTLKFRELVKYYQKQYPDLEIDVDLELIKFKKHANKLNELALVADTVITLDELRSSGKTVLVEGANGTMLDIDFGTYPFVTSSNATVGGAITGLGLPPMSIKRVIGVTKAYSTRVGSGPFPTELKNDIGDKLQRIGHEVGVTTGRKRRCGWIDLVLLKRAHLINGFTDIALTKLDVLDTFDVIKAGVAYRLDKELLKSPPSQASDWEKVEVEYRTFKGWNTPILAMRSFNELPENCRIFIEFIEQYVGVPVKWIGVGEEREALILREP.

Residues 19–25 and 49–51 contribute to the GTP site; these read GDEGKGK and GHT. Aspartate 20 functions as the Proton acceptor in the catalytic mechanism. Mg(2+)-binding residues include aspartate 20 and glycine 49. IMP-binding positions include 20–23, 47–50, threonine 139, arginine 153, asparagine 233, threonine 248, and arginine 312; these read DEGK and NAGH. Residue histidine 50 is the Proton donor of the active site. 308-314 is a substrate binding site; the sequence is VTTGRKR. Residues arginine 314, 340–342, and 422–424 contribute to the GTP site; these read KLD and GVG.

Belongs to the adenylosuccinate synthetase family. Homodimer. It depends on Mg(2+) as a cofactor.

It is found in the cytoplasm. The enzyme catalyses IMP + L-aspartate + GTP = N(6)-(1,2-dicarboxyethyl)-AMP + GDP + phosphate + 2 H(+). It participates in purine metabolism; AMP biosynthesis via de novo pathway; AMP from IMP: step 1/2. In terms of biological role, plays an important role in the de novo pathway and in the salvage pathway of purine nucleotide biosynthesis. Catalyzes the first committed step in the biosynthesis of AMP from IMP. The polypeptide is Adenylosuccinate synthetase (Brugia malayi (Filarial nematode worm)).